A 283-amino-acid chain; its full sequence is Thymidylate synthase (283 aa).

R22 contacts dUMP. C160 (nucleophile) is an active-site residue. DUMP-binding positions include 180 to 183, N191, and 221 to 223; these read RSCD and HIY. D183 contributes to the (6R)-5,10-methylene-5,6,7,8-tetrahydrofolate binding site. Residue A282 participates in (6R)-5,10-methylene-5,6,7,8-tetrahydrofolate binding.

The protein belongs to the thymidylate synthase family. Bacterial-type ThyA subfamily. Homodimer.

Its subcellular location is the cytoplasm. The enzyme catalyses dUMP + (6R)-5,10-methylene-5,6,7,8-tetrahydrofolate = 7,8-dihydrofolate + dTMP. It participates in pyrimidine metabolism; dTTP biosynthesis. Catalyzes the reductive methylation of 2'-deoxyuridine-5'-monophosphate (dUMP) to 2'-deoxythymidine-5'-monophosphate (dTMP) while utilizing 5,10-methylenetetrahydrofolate (mTHF) as the methyl donor and reductant in the reaction, yielding dihydrofolate (DHF) as a by-product. This enzymatic reaction provides an intracellular de novo source of dTMP, an essential precursor for DNA biosynthesis. This Idiomarina loihiensis (strain ATCC BAA-735 / DSM 15497 / L2-TR) protein is Thymidylate synthase.